Reading from the N-terminus, the 295-residue chain is Trimeric intracellular cation channel type A (295 aa).

Residues 1 to 11 lie on the Lumenal side of the membrane; it reads MELLSALSLDD. Residues 12 to 32 traverse the membrane as a helical segment; it reads LAVAFSKLPVFPLFDVAYYII. Residues 33 to 51 are Cytoplasmic-facing; that stretch reads SILYLKYEPGAVDLSKRSP. The helical transmembrane segment at 52 to 72 threads the bilayer; it reads VASWLCAMLYCFGSYILADVL. Over 73–84 the chain is Lumenal; the sequence is LGESPIHYFSNN. Gly74 is a Ca(2+) binding site. Residues 85 to 105 form a helical membrane-spanning segment; that stretch reads ANILLASAVWYLTFFCPLNIF. The Cytoplasmic segment spans residues 106 to 144; it reads YKIVSFLPLKLVLVGMKEVVRVRKIAMGIHHAHHHYHHG. A 1,2-diacyl-sn-glycero-3-phospho-(1D-myo-inositol-4,5-bisphosphate) contacts are provided by Lys122 and Arg126. The chain crosses the membrane as a helical span at residues 145–165; that stretch reads WVIMVLIGWVKGSGVALMSNL. Over 166–178 the chain is Lumenal; that stretch reads EQLLRGVWKPETN. The chain crosses the membrane as a helical span at residues 179-199; that stretch reads EILHMSFPTKASLYGAILFTL. Topologically, residues 200-201 are cytoplasmic; that stretch reads QQ. The chain crosses the membrane as a helical span at residues 202–222; that stretch reads AHWLPISKAYLIFFFTLFMAI. Residues 223 to 233 lie on the Lumenal side of the membrane; that stretch reads CKIYMTATHSH. The helical transmembrane segment at 234–254 threads the bilayer; sequence GSPFAIFESGICCVLFGAANG. At 255-295 the chain is on the cytoplasmic side; sequence DHDDHGDHHHHHDDHDVSHSTVKSKEELNEGTRKRKTKKAE. The segment covering 259 to 286 has biased composition (basic and acidic residues); the sequence is HGDHHHHHDDHDVSHSTVKSKEELNEGT. The interval 259–295 is disordered; sequence HGDHHHHHDDHDVSHSTVKSKEELNEGTRKRKTKKAE.

The protein belongs to the TMEM38 family. Homotrimer; conformation seems to be controled by binding to diacylglycerol (DAG).

It is found in the sarcoplasmic reticulum membrane. The protein localises to the nucleus membrane. It catalyses the reaction K(+)(in) = K(+)(out). With respect to regulation, channel activity is activated by a change of voltage within the sarcoplasmic reticulum lumen and blocked by luminal high Ca(2+) levels. Functionally, intracellular monovalent cation channel required for maintenance of rapid intracellular calcium release. Acts as a potassium counter-ion channel that functions in synchronization with calcium release from intracellular stores. Opened by a change of voltage within the sarcoplasmic reticulum lumen. The polypeptide is Trimeric intracellular cation channel type A (tmem38a) (Xenopus tropicalis (Western clawed frog)).